A 543-amino-acid polypeptide reads, in one-letter code: MKVATSALLVGAVSASVGPQQQVLKFPDSFSELKEGAWSKPLHKLEESLKTLTGEARAVWDEVAMMFPESFEKAAFFSEPKPHTRKHDSEWDHIIKGADIQNVWVENKNGDKEREIDGKLENYSMRTKKVDPSVLGVDKVKQYSGYLDDEEEDKHLFYWFFESRNDPKNDPVVLWLNGGPGCSSLTGLFMELGPASITKDGKIKHNPYSWNSNASVIFLDQPVNVGYSYSSGQVSNTVAAGKDIYALLTLFFKQFPEYAEQSFHISGESYAGHYIPVFASEILSHKKRNINLQSVLIGNGLTDGLTQYEYYRPMACGEGGWPAVLDESQCKAMDNAYPRCASLIENCYNSESVWSCVPASIYCNNAMIGPYQRTGQNVYDIRKPCGSNSLCYDELDWIQAYLNKKEVMKAVGAEISSYESCNFDINRNFLLQGDWMKPFHRIVPGLLAEIPVLIYAGDADYICNWLGNKAWTEALEWPGQKDYNKAEMEDFKIDGKGEAVGQVKSSGNFTFLKIHAGGHMVPYDQPEASLTMLNRWLAGDFWA.

The first 17 residues, 1–17 (MKVATSALLVGAVSASV), serve as a signal peptide directing secretion. A propeptide spanning residues 18–128 (GPQQQVLKFP…KLENYSMRTK (111 aa)) is cleaved from the precursor. Asparagine 122 and asparagine 213 each carry an N-linked (GlcNAc...) asparagine glycan. 5 cysteine pairs are disulfide-bonded: cysteine 182–cysteine 421, cysteine 316–cysteine 330, cysteine 340–cysteine 363, cysteine 347–cysteine 356, and cysteine 385–cysteine 391. Serine 269 is a catalytic residue. Residue aspartate 460 is part of the active site. N-linked (GlcNAc...) asparagine glycosylation is present at asparagine 508. Histidine 519 is a catalytic residue.

It belongs to the peptidase S10 family.

The protein resides in the vacuole. The enzyme catalyses Release of a C-terminal amino acid with broad specificity.. Functionally, vacuolar carboxypeptidase involved in degradation of small peptides. Digests preferentially peptides containing an aliphatic or hydrophobic residue in P1' position, as well as methionine, leucine or phenylalanine in P1 position of ester substrate. The sequence is that of Carboxypeptidase Y homolog A (CPYA) from Leptosphaeria maculans (strain JN3 / isolate v23.1.3 / race Av1-4-5-6-7-8) (Blackleg fungus).